Consider the following 186-residue polypeptide: Peptidyl-tRNA hydrolase (186 aa).

Tyr-17 is a tRNA binding site. Residue His-22 is the Proton acceptor of the active site. Residues Tyr-64 and Asn-66 each coordinate tRNA.

This sequence belongs to the PTH family. As to quaternary structure, monomer.

It localises to the cytoplasm. The enzyme catalyses an N-acyl-L-alpha-aminoacyl-tRNA + H2O = an N-acyl-L-amino acid + a tRNA + H(+). In terms of biological role, hydrolyzes ribosome-free peptidyl-tRNAs (with 1 or more amino acids incorporated), which drop off the ribosome during protein synthesis, or as a result of ribosome stalling. Its function is as follows. Catalyzes the release of premature peptidyl moieties from peptidyl-tRNA molecules trapped in stalled 50S ribosomal subunits, and thus maintains levels of free tRNAs and 50S ribosomes. This is Peptidyl-tRNA hydrolase from Methylacidiphilum infernorum (isolate V4) (Methylokorus infernorum (strain V4)).